The following is a 340-amino-acid chain: Ketol-acid reductoisomerase (NADP(+)) (340 aa).

The region spanning 2 to 182 (ANIYYENHAD…GCTRAGVIET (181 aa)) is the KARI N-terminal Rossmann domain. NADP(+) contacts are provided by residues 25-28 (FGSQ), serine 51, serine 53, and 83-86 (DTAQ). Histidine 108 is an active-site residue. NADP(+) is bound at residue glycine 134. Positions 183–328 (TFAEETETDL…RELRRMMPFV (146 aa)) constitute a KARI C-terminal knotted domain. Mg(2+) contacts are provided by aspartate 191, glutamate 195, glutamate 227, and glutamate 231. Serine 252 is a binding site for substrate.

Belongs to the ketol-acid reductoisomerase family. Mg(2+) is required as a cofactor.

It carries out the reaction (2R)-2,3-dihydroxy-3-methylbutanoate + NADP(+) = (2S)-2-acetolactate + NADPH + H(+). It catalyses the reaction (2R,3R)-2,3-dihydroxy-3-methylpentanoate + NADP(+) = (S)-2-ethyl-2-hydroxy-3-oxobutanoate + NADPH + H(+). Its pathway is amino-acid biosynthesis; L-isoleucine biosynthesis; L-isoleucine from 2-oxobutanoate: step 2/4. It participates in amino-acid biosynthesis; L-valine biosynthesis; L-valine from pyruvate: step 2/4. Its function is as follows. Involved in the biosynthesis of branched-chain amino acids (BCAA). Catalyzes an alkyl-migration followed by a ketol-acid reduction of (S)-2-acetolactate (S2AL) to yield (R)-2,3-dihydroxy-isovalerate. In the isomerase reaction, S2AL is rearranged via a Mg-dependent methyl migration to produce 3-hydroxy-3-methyl-2-ketobutyrate (HMKB). In the reductase reaction, this 2-ketoacid undergoes a metal-dependent reduction by NADPH to yield (R)-2,3-dihydroxy-isovalerate. The chain is Ketol-acid reductoisomerase (NADP(+)) from Roseiflexus castenholzii (strain DSM 13941 / HLO8).